Reading from the N-terminus, the 419-residue chain is MAYLFTSESVSEGHPDKIADQISDALLDNFLAFDGESKVACETMVTTGQVVLAGEVRSNTYLDVQNIARDVINDIGYTKGAYKFSGDSCGVISLIHEQSQDIYQGVDRGNKEEQGAGDQGMMFGYATNETENYMPLALDISHKILIELAKLRREGKEIEYLRPDSKSQVTIEYSDENVPERIVAIVVSTQHDDFDADDEKMLTKIKKDIIEILIPRVKKQLPEYVQKLFNDDIVYHINPTGKFVIGGPHGDAGLTGRKIIVDTYGGKGAHGGGAFSGKDPSKVDRSAAYASRHIAKNLVAAGVAPEILVQVSYAIGVVEPTSISVYTYGKNNTDLSDGQIAEKVKEIFDMRPSSIEDRLKLRNPIYRETAAYGHMGKEPRKVTKIFESPYKGKITREVELFTWEKLDYVDKVKDAFELN.

Histidine 14 lines the ATP pocket. Aspartate 16 provides a ligand contact to Mg(2+). Glutamate 42 contributes to the K(+) binding site. Positions 55 and 98 each coordinate L-methionine. The tract at residues 98–108 (QSQDIYQGVDR) is flexible loop. ATP-binding positions include 164–166 (DSK), 242–243 (KF), aspartate 251, 257–258 (RK), alanine 274, and lysine 278. Residue aspartate 251 participates in L-methionine binding. Lysine 282 contacts L-methionine.

The protein belongs to the AdoMet synthase family. In terms of assembly, homotetramer; dimer of dimers. Mg(2+) serves as cofactor. K(+) is required as a cofactor.

It is found in the cytoplasm. It carries out the reaction L-methionine + ATP + H2O = S-adenosyl-L-methionine + phosphate + diphosphate. It functions in the pathway amino-acid biosynthesis; S-adenosyl-L-methionine biosynthesis; S-adenosyl-L-methionine from L-methionine: step 1/1. Functionally, catalyzes the formation of S-adenosylmethionine (AdoMet) from methionine and ATP. The overall synthetic reaction is composed of two sequential steps, AdoMet formation and the subsequent tripolyphosphate hydrolysis which occurs prior to release of AdoMet from the enzyme. This chain is S-adenosylmethionine synthase, found in Christiangramia forsetii (strain DSM 17595 / CGMCC 1.15422 / KT0803) (Gramella forsetii).